Consider the following 86-residue polypeptide: Large ribosomal subunit protein bL27 (86 aa).

The span at 1–10 (MAQKKGGGST) shows a compositional bias: gly residues. The disordered stretch occupies residues 1-20 (MAQKKGGGSTRNGRDSESKR).

It belongs to the bacterial ribosomal protein bL27 family.

The sequence is that of Large ribosomal subunit protein bL27 from Bordetella parapertussis (strain 12822 / ATCC BAA-587 / NCTC 13253).